The following is a 142-amino-acid chain: Hemoglobin subunit alpha-1 (142 aa).

Positions Val-2–Arg-142 constitute a Globin domain. His-59 is a binding site for O2. His-88 is a heme b binding site.

Belongs to the globin family. In terms of assembly, heterotetramer of two alpha chains and two beta chains. In terms of tissue distribution, red blood cells.

Involved in oxygen transport from the lung to the various peripheral tissues. Functionally, hemopressin acts as an antagonist peptide of the cannabinoid receptor CNR1. Hemopressin-binding efficiently blocks cannabinoid receptor CNR1 and subsequent signaling. This is Hemoglobin subunit alpha-1 (HBA1) from Hylobates lar (Lar gibbon).